The chain runs to 443 residues: Tol-Pal system protein TolB (443 aa).

A signal peptide spans 1-31; that stretch reads MTRLAKGKWRSTLGAMMALAVMVAAIPQARA. The segment covering 423–432 has biased composition (polar residues); it reads NERQISTPTE. The tract at residues 423 to 443 is disordered; it reads NERQISTPTEASDPAWSPLLP.

This sequence belongs to the TolB family. As to quaternary structure, the Tol-Pal system is composed of five core proteins: the inner membrane proteins TolA, TolQ and TolR, the periplasmic protein TolB and the outer membrane protein Pal. They form a network linking the inner and outer membranes and the peptidoglycan layer.

It is found in the periplasm. Functionally, part of the Tol-Pal system, which plays a role in outer membrane invagination during cell division and is important for maintaining outer membrane integrity. The polypeptide is Tol-Pal system protein TolB (Rhodospirillum rubrum (strain ATCC 11170 / ATH 1.1.1 / DSM 467 / LMG 4362 / NCIMB 8255 / S1)).